A 315-amino-acid polypeptide reads, in one-letter code: Cytosolic Fe-S cluster assembly factor nubp1-A (315 aa).

The segment at 1-23 is disordered; the sequence is MADIPDNAPQHCPGTDSTEAGKS. Residues C12, C26, C29, and C35 each coordinate [4Fe-4S] cluster. Residue 66–73 coordinates ATP; it reads GKGGVGKS. Residues C239 and C242 each contribute to the [4Fe-4S] cluster site.

Belongs to the Mrp/NBP35 ATP-binding proteins family. NUBP1/NBP35 subfamily. In terms of assembly, heterotetramer of 2 nubp1 and 2 nubp2 chains. The cofactor is [4Fe-4S] cluster.

Its subcellular location is the cytoplasm. In terms of biological role, component of the cytosolic iron-sulfur (Fe/S) protein assembly (CIA) machinery. Required for maturation of extramitochondrial Fe-S proteins. The nubp1-nubp2 heterotetramer forms a Fe-S scaffold complex, mediating the de novo assembly of an Fe-S cluster and its transfer to target apoproteins. This is Cytosolic Fe-S cluster assembly factor nubp1-A (nubp1-A) from Xenopus laevis (African clawed frog).